The following is a 382-amino-acid chain: Mannitol-1-phosphate 5-dehydrogenase (382 aa).

3-14 provides a ligand contact to NAD(+); that stretch reads ALHFGAGNIGRG. Lysine 269 carries the N6-acetyllysine modification.

It belongs to the mannitol dehydrogenase family.

It carries out the reaction D-mannitol 1-phosphate + NAD(+) = beta-D-fructose 6-phosphate + NADH + H(+). The protein is Mannitol-1-phosphate 5-dehydrogenase of Escherichia coli O139:H28 (strain E24377A / ETEC).